Reading from the N-terminus, the 275-residue chain is NH(3)-dependent NAD(+) synthetase (275 aa).

Residue 50-57 (GISGGVDS) coordinates ATP. Asp-56 contributes to the Mg(2+) binding site. Residue Arg-147 participates in deamido-NAD(+) binding. Thr-167 provides a ligand contact to ATP. Glu-172 lines the Mg(2+) pocket. 2 residues coordinate deamido-NAD(+): Lys-180 and Asp-187. Lys-196 and Thr-218 together coordinate ATP. Deamido-NAD(+) is bound at residue 267 to 268 (HK).

This sequence belongs to the NAD synthetase family. As to quaternary structure, homodimer.

The catalysed reaction is deamido-NAD(+) + NH4(+) + ATP = AMP + diphosphate + NAD(+) + H(+). The protein operates within cofactor biosynthesis; NAD(+) biosynthesis; NAD(+) from deamido-NAD(+) (ammonia route): step 1/1. Functionally, catalyzes the ATP-dependent amidation of deamido-NAD to form NAD. Uses ammonia as a nitrogen source. The polypeptide is NH(3)-dependent NAD(+) synthetase (Pseudomonas putida (strain GB-1)).